A 382-amino-acid chain; its full sequence is MAARNWIGLFSRGEGNNLTNALERGYEAALLIQSLELEFYADRKVRPELELSVPRSVQATVLRRFHAALQICRSSLSTVTPNRGQLDPQELRQLQLIETVVSRYSGKRSSSKSGMSTAPELLPRSLLGVFDSVRRQLDPSSEESVVAGFRRRRDSTLASLRILLLLVLVPLLVQQVSNTYIVGPAVERLSPDLSFLSYPKPQLEEVAVEKLRIYKEELEFDALLKGQEPLSSDLLVIKLRERAQELKQEADQESVQAIKNVLADLAGLMAFVVVCLVSRDQLRVLRGFLDEAIYGLSDSAKAFAIILFTDIFVGYHSPEGWTVLLDGIAHHFGLPTQENFILLFIATFPVILATIFKYWIFRYLNRVSPSSVATLKGMNGGG.

A run of 4 helical transmembrane segments spans residues 162 to 182 (ILLL…TYIV), 257 to 277 (AIKN…VCLV), 305 to 325 (IILF…TVLL), and 340 to 360 (FILL…KYWI).

This sequence belongs to the CemA family.

The protein localises to the cell inner membrane. Functionally, required for H(+) efflux immediately after light irradiation to form a rapid H(+) concentration gradient across the thylakoid membranes. Together with PxcL, contributes to transient H(+) uptake following dark to light transition. In Parasynechococcus marenigrum (strain WH8102), this protein is Proton extrusion protein PxcA.